A 136-amino-acid polypeptide reads, in one-letter code: Small ribosomal subunit protein uS8c (136 aa).

This sequence belongs to the universal ribosomal protein uS8 family. Part of the 30S ribosomal subunit.

The protein localises to the plastid. One of the primary rRNA binding proteins, it binds directly to 16S rRNA central domain where it helps coordinate assembly of the platform of the 30S subunit. This is Small ribosomal subunit protein uS8c (rps8) from Helicosporidium sp. subsp. Simulium jonesii (Green alga).